We begin with the raw amino-acid sequence, 98 residues long: Large ribosomal subunit protein bL25 (98 aa).

Residues 1-23 are disordered; that stretch reads MANFVLNAQARAEDKQGKGASRR.

This sequence belongs to the bacterial ribosomal protein bL25 family. As to quaternary structure, part of the 50S ribosomal subunit; part of the 5S rRNA/L5/L18/L25 subcomplex. Contacts the 5S rRNA. Binds to the 5S rRNA independently of L5 and L18.

In terms of biological role, this is one of the proteins that binds to the 5S RNA in the ribosome where it forms part of the central protuberance. The polypeptide is Large ribosomal subunit protein bL25 (Acinetobacter baumannii (strain ATCC 17978 / DSM 105126 / CIP 53.77 / LMG 1025 / NCDC KC755 / 5377)).